The following is a 475-amino-acid chain: Ankyrin repeat, SAM and basic leucine zipper domain-containing protein 1 (475 aa).

The tract at residues 1 to 25 (MAAGALRGLPVAGGGESSESEDDGW) is disordered. Residues Ser-17, Ser-18, and Ser-20 each carry the phosphoserine modification. ANK repeat units lie at residues 45-74 (EKKE…SVDS), 78-107 (YGWT…NASF), 110-144 (DKQT…DPNV), 148-177 (RLMT…EVNT), 181-210 (NGYT…NKML), and 214-243 (DGKM…PLEG). An SAM domain is found at 272-334 (SYTAFGDLEV…KILAALKELQ (63 aa)).

Interacts with DDX4, PIWIL1, RANBP9 and TDRD1.

It localises to the cytoplasm. Its function is as follows. Plays a central role during spermatogenesis by repressing transposable elements and preventing their mobilization, which is essential for the germline integrity. Acts via the piRNA metabolic process, which mediates the repression of transposable elements during meiosis by forming complexes composed of piRNAs and Piwi proteins and governs the methylation and subsequent repression of transposons. Its association with pi-bodies suggests a participation in the primary piRNAs metabolic process. Required prior to the pachytene stage to facilitate the production of multiple types of piRNAs, including those associated with repeats involved in the regulation of retrotransposons. May act by mediating protein-protein interactions during germ cell maturation. The polypeptide is Ankyrin repeat, SAM and basic leucine zipper domain-containing protein 1 (ASZ1) (Chlorocebus aethiops (Green monkey)).